Here is a 248-residue protein sequence, read N- to C-terminus: MRVDGREKNALRKIEVTPDYLMHPEGSVLIASGNTKVICSASVETKVPPFMRGEGRGWISAEYSMLPRATNTRNIRESSKGKVTGRTMEIQRLIGRALRAVVDLDALGERTIWLDCDVIQADGGTRTASITGAFIAMVMAIAKLDEQVPFTKFPVKDFLAATSVGVLEEGGTVLDLNYIEDSAAQVDMNIIMTGSGAFVELQGTGEEATFSETELAELIALGKKGISELIEIQKEILGDKITARIKGE.

Phosphate-binding positions include R86 and 124–126; that span reads GTR.

The protein belongs to the RNase PH family. As to quaternary structure, homohexameric ring arranged as a trimer of dimers.

It carries out the reaction tRNA(n+1) + phosphate = tRNA(n) + a ribonucleoside 5'-diphosphate. Phosphorolytic 3'-5' exoribonuclease that plays an important role in tRNA 3'-end maturation. Removes nucleotide residues following the 3'-CCA terminus of tRNAs; can also add nucleotides to the ends of RNA molecules by using nucleoside diphosphates as substrates, but this may not be physiologically important. Probably plays a role in initiation of 16S rRNA degradation (leading to ribosome degradation) during starvation. The protein is Ribonuclease PH of Listeria welshimeri serovar 6b (strain ATCC 35897 / DSM 20650 / CCUG 15529 / CIP 8149 / NCTC 11857 / SLCC 5334 / V8).